The following is a 431-amino-acid chain: Enolase (431 aa).

(2R)-2-phosphoglycerate is bound at residue Gln-167. The Proton donor role is filled by Glu-209. Positions 246, 289, and 316 each coordinate Mg(2+). Lys-341, Arg-370, Ser-371, and Lys-392 together coordinate (2R)-2-phosphoglycerate. Lys-341 serves as the catalytic Proton acceptor.

It belongs to the enolase family. Component of the RNA degradosome, a multiprotein complex involved in RNA processing and mRNA degradation. Mg(2+) is required as a cofactor.

The protein resides in the cytoplasm. It is found in the secreted. The protein localises to the cell surface. It catalyses the reaction (2R)-2-phosphoglycerate = phosphoenolpyruvate + H2O. It participates in carbohydrate degradation; glycolysis; pyruvate from D-glyceraldehyde 3-phosphate: step 4/5. In terms of biological role, catalyzes the reversible conversion of 2-phosphoglycerate (2-PG) into phosphoenolpyruvate (PEP). It is essential for the degradation of carbohydrates via glycolysis. The chain is Enolase from Shewanella sp. (strain MR-4).